Here is a 441-residue protein sequence, read N- to C-terminus: Damage-control phosphatase ARMT1 (441 aa).

The residue at position 2 (Ala-2) is an N-acetylalanine. An N6-acetyllysine modification is found at Lys-40. Residue Ser-102 is modified to Phosphoserine. Residues Asp-253 and Asn-254 each coordinate Mn(2+). Asp-253–Asn-254 is a binding site for substrate. S-adenosyl-L-methionine is bound by residues Glu-258 and Asp-291. Asp-291 is a binding site for Mn(2+). Residues Asp-367 to Arg-371 and Lys-404 contribute to the substrate site. The Subfamily III RTxK motif signature appears at Arg-401–Lys-404.

Belongs to the damage-control phosphatase family. Sugar phosphate phosphatase III subfamily. Mn(2+) serves as cofactor. Requires Ni(2+) as cofactor. In terms of processing, automethylated.

The enzyme catalyses beta-D-fructose 1-phosphate + H2O = D-fructose + phosphate. It carries out the reaction beta-D-fructose 6-phosphate = dihydroxyacetone + D-glyceraldehyde 3-phosphate. The catalysed reaction is L-glutamyl-[protein] + S-adenosyl-L-methionine = [protein]-L-glutamate 5-O-methyl ester + S-adenosyl-L-homocysteine. In terms of biological role, metal-dependent phosphatase that shows phosphatase activity against several substrates, including fructose-1-phosphate and fructose-6-phosphate. Its preference for fructose-1-phosphate, a strong glycating agent that causes DNA damage rather than a canonical yeast metabolite, suggests a damage-control function in hexose phosphate metabolism. Has also been shown to have O-methyltransferase activity that methylates glutamate residues of target proteins to form gamma-glutamyl methyl ester residues. Possibly methylates PCNA, suggesting it is involved in the DNA damage response. This Macaca fascicularis (Crab-eating macaque) protein is Damage-control phosphatase ARMT1.